The sequence spans 907 residues: Dual serine/threonine and tyrosine protein kinase (907 aa).

Residues 373–409 (RKKENELYESLMNIANRKQEEMKDMIVETLNTMKEEL) adopt a coiled-coil conformation. A Protein kinase domain is found at 630 to 884 (PKLGQELGRG…PLLGIVQPML (255 aa)). Residues 636–644 (LGRGQYGVV) and Lys659 contribute to the ATP site. The Proton acceptor role is filled by Asp755.

It belongs to the protein kinase superfamily. Ser/Thr protein kinase family.

It localises to the cytoplasm. Its subcellular location is the cell membrane. It is found in the apical cell membrane. The protein resides in the basolateral cell membrane. The protein localises to the cell junction. It catalyses the reaction L-seryl-[protein] + ATP = O-phospho-L-seryl-[protein] + ADP + H(+). The catalysed reaction is L-threonyl-[protein] + ATP = O-phospho-L-threonyl-[protein] + ADP + H(+). The enzyme catalyses L-tyrosyl-[protein] + ATP = O-phospho-L-tyrosyl-[protein] + ADP + H(+). Acts as a positive regulator of ERK phosphorylation downstream of fibroblast growth factor-receptor activation. Involved in the regulation of both caspase-dependent apoptosis and caspase-independent cell death. In the skin, it plays a predominant role in suppressing caspase-dependent apoptosis in response to UV stress in a range of dermal cell types. The polypeptide is Dual serine/threonine and tyrosine protein kinase (Macaca mulatta (Rhesus macaque)).